The following is a 369-amino-acid chain: Anhydro-N-acetylmuramic acid kinase (369 aa).

An ATP-binding site is contributed by 12-19 (GTSLDGVD).

Belongs to the anhydro-N-acetylmuramic acid kinase family.

It catalyses the reaction 1,6-anhydro-N-acetyl-beta-muramate + ATP + H2O = N-acetyl-D-muramate 6-phosphate + ADP + H(+). It participates in amino-sugar metabolism; 1,6-anhydro-N-acetylmuramate degradation. It functions in the pathway cell wall biogenesis; peptidoglycan recycling. Functionally, catalyzes the specific phosphorylation of 1,6-anhydro-N-acetylmuramic acid (anhMurNAc) with the simultaneous cleavage of the 1,6-anhydro ring, generating MurNAc-6-P. Is required for the utilization of anhMurNAc either imported from the medium or derived from its own cell wall murein, and thus plays a role in cell wall recycling. The chain is Anhydro-N-acetylmuramic acid kinase from Escherichia coli O8 (strain IAI1).